The following is a 516-amino-acid chain: NADH-quinone oxidoreductase subunit N (516 aa).

The next 14 membrane-spanning stretches (helical) occupy residues Leu-12–Val-32, Val-37–Gly-57, Leu-81–Leu-101, Val-108–Ala-128, Leu-131–Leu-151, Val-163–Leu-183, Val-213–Ala-233, Val-246–Val-266, Ile-274–Ala-294, Leu-303–Ala-323, Val-341–Leu-361, Val-386–Phe-406, Gly-419–Leu-439, and Val-491–Leu-511.

It belongs to the complex I subunit 2 family. In terms of assembly, NDH-1 is composed of 14 different subunits. Subunits NuoA, H, J, K, L, M, N constitute the membrane sector of the complex.

It localises to the cell membrane. The catalysed reaction is a quinone + NADH + 5 H(+)(in) = a quinol + NAD(+) + 4 H(+)(out). Functionally, NDH-1 shuttles electrons from NADH, via FMN and iron-sulfur (Fe-S) centers, to quinones in the respiratory chain. The immediate electron acceptor for the enzyme in this species is believed to be a menaquinone. Couples the redox reaction to proton translocation (for every two electrons transferred, four hydrogen ions are translocated across the cytoplasmic membrane), and thus conserves the redox energy in a proton gradient. This Salinispora tropica (strain ATCC BAA-916 / DSM 44818 / JCM 13857 / NBRC 105044 / CNB-440) protein is NADH-quinone oxidoreductase subunit N.